Reading from the N-terminus, the 338-residue chain is Glyceraldehyde-3-phosphate dehydrogenase (338 aa).

Residues 13–14 (RI), Asp35, and Arg80 contribute to the NAD(+) site. Residues 151 to 153 (SCT), Thr182, 211 to 212 (TG), and Arg234 contribute to the D-glyceraldehyde 3-phosphate site. The active-site Nucleophile is the Cys152. An NAD(+)-binding site is contributed by Asn316.

The protein belongs to the glyceraldehyde-3-phosphate dehydrogenase family. Homotetramer.

It is found in the cytoplasm. It carries out the reaction D-glyceraldehyde 3-phosphate + phosphate + NAD(+) = (2R)-3-phospho-glyceroyl phosphate + NADH + H(+). It participates in carbohydrate degradation; glycolysis; pyruvate from D-glyceraldehyde 3-phosphate: step 1/5. In Sclerotinia sclerotiorum (White mold), this protein is Glyceraldehyde-3-phosphate dehydrogenase (GPD).